Here is a 270-residue protein sequence, read N- to C-terminus: Sulfur carrier protein FdhD (270 aa).

Catalysis depends on C116, which acts as the Cysteine persulfide intermediate. 253 to 258 (FAREGK) lines the Mo-bis(molybdopterin guanine dinucleotide) pocket.

Belongs to the FdhD family.

The protein resides in the cytoplasm. Its function is as follows. Required for formate dehydrogenase (FDH) activity. Acts as a sulfur carrier protein that transfers sulfur from IscS to the molybdenum cofactor prior to its insertion into FDH. This Haemophilus influenzae (strain 86-028NP) protein is Sulfur carrier protein FdhD.